The chain runs to 265 residues: Putative hydro-lyase Teth514_1597 (265 aa).

Belongs to the D-glutamate cyclase family.

The polypeptide is Putative hydro-lyase Teth514_1597 (Thermoanaerobacter sp. (strain X514)).